The primary structure comprises 802 residues: Ent-copalyl diphosphate synthase, chloroplastic (802 aa).

A chloroplast-targeting transit peptide spans 1-60 (MSLQYHVLNSIPSTTFLSSTKTTISSSFLTISGSPLNVARDKSRSGSIHCSKLRTQEYIN). A substrate-binding site is contributed by lysine 245. Aspartate 377 and aspartate 379 together coordinate Mg(2+). Positions 377-380 (DIDD) match the DXDD motif motif. Lysine 463 contributes to the substrate binding site.

Belongs to the terpene synthase family. Tpsc subfamily. Mg(2+) serves as cofactor. In terms of processing, the N-terminus is blocked. In terms of tissue distribution, expressed in roots, leaves, flowers and also in siliques.

Its subcellular location is the plastid. The protein localises to the chloroplast. It catalyses the reaction (2E,6E,10E)-geranylgeranyl diphosphate = ent-copalyl diphosphate. Its pathway is plant hormone biosynthesis; gibberellin biosynthesis. Its activity is regulated as follows. Inhibited by high concentrations of magnesium. Its function is as follows. Catalyzes the conversion of geranylgeranyl diphosphate to the gibberellin precursor ent-copalyl diphosphate. The protein is Ent-copalyl diphosphate synthase, chloroplastic (GA1) of Arabidopsis thaliana (Mouse-ear cress).